The primary structure comprises 227 residues: DNA repair protein RecO (227 aa).

The protein belongs to the RecO family.

Involved in DNA repair and RecF pathway recombination. This Pseudomonas putida (strain W619) protein is DNA repair protein RecO.